Reading from the N-terminus, the 482-residue chain is MSQHPRFIATWRDELPGFYTELTPTPLNNSRLLCHNAPLAQALELPETLFDYQGPAGVWGGETLLPGMAPLAQVYSGHQFGVWAGQLGDGRGILLGEQQLSDGCKLDWHLKGAGLTPYSRMGDGRAVLRSTVREFLASEAMHGLGIPTTRALTIVTSDTPVRRETTERGAMLMRIAESHVRFGHFEHFYYRREPERVRELAQYVIEHHFAHLAQEEDRFALWFGEVVTRTAQLMASWQCVGFAHGVMNTDNMSILGLTMDYGPYGFLDDYQPGFICNHTDYQGRYAFDNQPGVGLWNLQRLAQALSPIIPAERLNALLDDYQPALLREWGRQMRAKLGFTVEKEGDNDYLRELLTLMAREGSDYTRTFRMLSETEQHSSASPLRDEFIDRATFDAWFARYRARLEEEGEEDDARQRLMKSVNPALVLRNWLAQRAIEAAERDDASELSRLLEALRNPFADRDDDYTHRPPDWGKHLEVSCSS.

ATP contacts are provided by Gly88, Gly90, Arg91, Lys111, Asp123, Gly124, Arg174, and Arg181. The active-site Proton acceptor is the Asp250. Asn251 and Asp260 together coordinate Mg(2+). Asp260 contacts ATP.

Belongs to the SELO family. Mg(2+) serves as cofactor. Mn(2+) is required as a cofactor.

It carries out the reaction L-seryl-[protein] + ATP = 3-O-(5'-adenylyl)-L-seryl-[protein] + diphosphate. The enzyme catalyses L-threonyl-[protein] + ATP = 3-O-(5'-adenylyl)-L-threonyl-[protein] + diphosphate. The catalysed reaction is L-tyrosyl-[protein] + ATP = O-(5'-adenylyl)-L-tyrosyl-[protein] + diphosphate. It catalyses the reaction L-histidyl-[protein] + UTP = N(tele)-(5'-uridylyl)-L-histidyl-[protein] + diphosphate. It carries out the reaction L-seryl-[protein] + UTP = O-(5'-uridylyl)-L-seryl-[protein] + diphosphate. The enzyme catalyses L-tyrosyl-[protein] + UTP = O-(5'-uridylyl)-L-tyrosyl-[protein] + diphosphate. In terms of biological role, nucleotidyltransferase involved in the post-translational modification of proteins. It can catalyze the addition of adenosine monophosphate (AMP) or uridine monophosphate (UMP) to a protein, resulting in modifications known as AMPylation and UMPylation. The sequence is that of Protein nucleotidyltransferase YdiU from Cronobacter sakazakii (strain ATCC BAA-894) (Enterobacter sakazakii).